The following is a 142-amino-acid chain: Large ribosomal subunit protein bL27m (142 aa).

Positions T27–K48 are disordered. Residues S30 to K43 show a composition bias toward polar residues.

This sequence belongs to the bacterial ribosomal protein bL27 family.

The protein resides in the mitochondrion. This is Large ribosomal subunit protein bL27m (mrpl27) from Dictyostelium discoideum (Social amoeba).